The sequence spans 446 residues: Histidine--tRNA ligase (446 aa).

Belongs to the class-II aminoacyl-tRNA synthetase family. In terms of assembly, homodimer.

It is found in the cytoplasm. The catalysed reaction is tRNA(His) + L-histidine + ATP = L-histidyl-tRNA(His) + AMP + diphosphate + H(+). In Burkholderia pseudomallei (strain 1710b), this protein is Histidine--tRNA ligase.